We begin with the raw amino-acid sequence, 352 residues long: Anthranilate phosphoribosyltransferase (352 aa).

5-phospho-alpha-D-ribose 1-diphosphate-binding positions include G91, 94-95, T99, 101-104, 119-127, and S131; these read GD, NIST, and KHGNRASSS. G91 is a binding site for anthranilate. A Mg(2+)-binding site is contributed by S103. N122 is an anthranilate binding site. R177 serves as a coordination point for anthranilate. Mg(2+)-binding residues include D235 and E236.

The protein belongs to the anthranilate phosphoribosyltransferase family. As to quaternary structure, homodimer. The cofactor is Mg(2+).

The catalysed reaction is N-(5-phospho-beta-D-ribosyl)anthranilate + diphosphate = 5-phospho-alpha-D-ribose 1-diphosphate + anthranilate. It participates in amino-acid biosynthesis; L-tryptophan biosynthesis; L-tryptophan from chorismate: step 2/5. Catalyzes the transfer of the phosphoribosyl group of 5-phosphorylribose-1-pyrophosphate (PRPP) to anthranilate to yield N-(5'-phosphoribosyl)-anthranilate (PRA). This is Anthranilate phosphoribosyltransferase from Arthrobacter sp. (strain FB24).